A 229-amino-acid polypeptide reads, in one-letter code: Imidazoleglycerol-phosphate dehydratase (229 aa).

This sequence belongs to the imidazoleglycerol-phosphate dehydratase family.

It carries out the reaction D-erythro-1-(imidazol-4-yl)glycerol 3-phosphate = 3-(imidazol-4-yl)-2-oxopropyl phosphate + H2O. Its pathway is amino-acid biosynthesis; L-histidine biosynthesis; L-histidine from 5-phospho-alpha-D-ribose 1-diphosphate: step 6/9. The polypeptide is Imidazoleglycerol-phosphate dehydratase (Neurospora crassa (strain ATCC 24698 / 74-OR23-1A / CBS 708.71 / DSM 1257 / FGSC 987)).